A 206-amino-acid chain; its full sequence is Na(+)-translocating NADH-quinone reductase subunit E (206 aa).

6 helical membrane-spanning segments follow: residues A12 to V32, I36 to V56, F85 to F105, G118 to V138, V148 to I168, and L184 to I204.

This sequence belongs to the NqrDE/RnfAE family. As to quaternary structure, composed of six subunits; NqrA, NqrB, NqrC, NqrD, NqrE and NqrF.

The protein resides in the cell inner membrane. The catalysed reaction is a ubiquinone + n Na(+)(in) + NADH + H(+) = a ubiquinol + n Na(+)(out) + NAD(+). NQR complex catalyzes the reduction of ubiquinone-1 to ubiquinol by two successive reactions, coupled with the transport of Na(+) ions from the cytoplasm to the periplasm. NqrA to NqrE are probably involved in the second step, the conversion of ubisemiquinone to ubiquinol. The polypeptide is Na(+)-translocating NADH-quinone reductase subunit E (Chromohalobacter salexigens (strain ATCC BAA-138 / DSM 3043 / CIP 106854 / NCIMB 13768 / 1H11)).